Here is a 406-residue protein sequence, read N- to C-terminus: Interactor protein for cytohesin exchange factors 1 (406 aa).

The PH domain maps to 13–112 (HADCQGWLYK…WLNKLGFAVT (100 aa)). Disordered regions lie at residues 120–173 (DEEC…FSSL), 253–285 (SLNN…EDDE), and 383–406 (PQDP…ENSL). Over residues 123-134 (CYSESEQEDPEV) the composition is skewed to acidic residues. The segment covering 144-153 (ASTTSSPVAA) has biased composition (low complexity). Residue Arg164 is modified to Phosphoserine. Residues 272–285 (MADREEIKSSEDDE) show a composition bias toward basic and acidic residues. Residues 392-406 (EVMNPTSSDCVENSL) show a composition bias toward polar residues.

Interacts with guanine-nucleotide exchange factors PSCD1, PSCD2, PSCD3 and PSCD4.

It localises to the cytoplasm. The protein localises to the cell membrane. Functionally, enhances the promotion of guanine-nucleotide exchange by PSCD2 on ARF6 in a concentration-dependent manner. The sequence is that of Interactor protein for cytohesin exchange factors 1 (Ipcef1) from Mus musculus (Mouse).